Reading from the N-terminus, the 306-residue chain is Serine/threonine-protein phosphatase PP2A-1 catalytic subunit (306 aa).

Residues Asp-54, His-56, Asp-82, and Asn-114 each coordinate Mn(2+). Residue His-115 is the Proton donor of the active site. The Mn(2+) site is built by His-164 and His-238. At Leu-306 the chain carries Leucine methyl ester.

Belongs to the PPP phosphatase family. PP-2A subfamily. PP2A consists of a common heterodimeric core enzyme, composed of a 36 kDa catalytic subunit (subunit C) and a 65 kDa constant regulatory subunit (subunit A), that associates with a variety of regulatory subunits such as subunits B (the R2/B/PR55/B55, R3/B''/PR72/PR130/PR59 and R5/B'/B56 families). Interacts with TAF12B. Interacts with SRK2E/OST1. Interacts with TAP46. Mn(2+) serves as cofactor. In terms of processing, reversibly methyl esterified on Leu-306 by leucine carboxyl methyltransferase 1 (LCMT1) and pectin methylesterase 1 (PME1). Carboxyl methylation influences the affinity of the catalytic subunit for the different regulatory subunits, thereby modulating the PP2A holoenzyme's substrate specificity, enzyme activity and cellular localization. Phosphorylation of either threonine (by autophosphorylation-activated protein kinase) or tyrosine results in inactivation of the phosphatase. Auto-dephosphorylation has been suggested as a mechanism for reactivation.

The protein resides in the cytoplasm. It carries out the reaction O-phospho-L-seryl-[protein] + H2O = L-seryl-[protein] + phosphate. The enzyme catalyses O-phospho-L-threonyl-[protein] + H2O = L-threonyl-[protein] + phosphate. The sequence is that of Serine/threonine-protein phosphatase PP2A-1 catalytic subunit from Arabidopsis thaliana (Mouse-ear cress).